The following is a 97-amino-acid chain: C-C motif chemokine 7 (97 aa).

The first 23 residues, 1–23 (MQISAALLCVLLTAAAFTVHVWA), serve as a signal peptide directing secretion. Q24 carries the pyrrolidone carboxylic acid modification. N29 carries an N-linked (GlcNAc...) asparagine glycan. Cystine bridges form between C33–C57 and C34–C73.

The protein belongs to the intercrine beta (chemokine CC) family. As to quaternary structure, monomer. Interacts with TNFAIP6 (via Link domain).

The protein resides in the secreted. In terms of biological role, chemotactic factor that attracts monocytes and eosinophils, but not neutrophils. Augments monocyte anti-tumor activity. The protein is C-C motif chemokine 7 (Ccl7) of Rattus norvegicus (Rat).